A 307-amino-acid chain; its full sequence is Tyrosine recombinase XerC (307 aa).

In terms of domain architecture, Core-binding (CB) spans His6 to Met89. In terms of domain architecture, Tyr recombinase spans Arg110 to Asp293. Residues Arg151, Lys175, His245, Arg248, and His271 contribute to the active site. Tyr280 serves as the catalytic O-(3'-phospho-DNA)-tyrosine intermediate.

It belongs to the 'phage' integrase family. XerC subfamily. As to quaternary structure, forms a cyclic heterotetrameric complex composed of two molecules of XerC and two molecules of XerD.

It is found in the cytoplasm. Site-specific tyrosine recombinase, which acts by catalyzing the cutting and rejoining of the recombining DNA molecules. The XerC-XerD complex is essential to convert dimers of the bacterial chromosome into monomers to permit their segregation at cell division. It also contributes to the segregational stability of plasmids. The chain is Tyrosine recombinase XerC from Alcanivorax borkumensis (strain ATCC 700651 / DSM 11573 / NCIMB 13689 / SK2).